The primary structure comprises 94 residues: Large ribosomal subunit protein uL23 (94 aa).

Belongs to the universal ribosomal protein uL23 family. As to quaternary structure, part of the 50S ribosomal subunit. Contacts protein L29, and trigger factor when it is bound to the ribosome.

One of the early assembly proteins it binds 23S rRNA. One of the proteins that surrounds the polypeptide exit tunnel on the outside of the ribosome. Forms the main docking site for trigger factor binding to the ribosome. This is Large ribosomal subunit protein uL23 from Geobacter sp. (strain M21).